The chain runs to 127 residues: uncharacterized protein (127 aa).

A helical membrane pass occupies residues Ile91–Leu113.

It is found in the membrane. This is an uncharacterized protein from Bacillus subtilis (strain 168).